We begin with the raw amino-acid sequence, 322 residues long: Putative HTH-type transcriptional regulatory protein rrnAC2519 (322 aa).

Positions Leu132 to Leu189 constitute an HTH cro/C1-type domain. The segment at residues Leu143–Asp162 is a DNA-binding region (H-T-H motif).

This is Putative HTH-type transcriptional regulatory protein rrnAC2519 from Haloarcula marismortui (strain ATCC 43049 / DSM 3752 / JCM 8966 / VKM B-1809) (Halobacterium marismortui).